A 281-amino-acid chain; its full sequence is Small ribosomal subunit protein uS2 (281 aa).

The interval 229-281 (RSGANKTEGEAAEQPMAAWEKELLTNEAPAEASAEAAAPAAAEGETAEAPKAE) is disordered. Residues 255 to 275 (EAPAEASAEAAAPAAAEGETA) show a composition bias toward low complexity.

The protein belongs to the universal ribosomal protein uS2 family.

The sequence is that of Small ribosomal subunit protein uS2 from Bifidobacterium longum subsp. infantis (strain ATCC 15697 / DSM 20088 / JCM 1222 / NCTC 11817 / S12).